The primary structure comprises 159 residues: Large ribosomal subunit protein uL13 (159 aa).

It belongs to the universal ribosomal protein uL13 family. As to quaternary structure, part of the 50S ribosomal subunit.

This protein is one of the early assembly proteins of the 50S ribosomal subunit, although it is not seen to bind rRNA by itself. It is important during the early stages of 50S assembly. This is Large ribosomal subunit protein uL13 from Methanopyrus kandleri (strain AV19 / DSM 6324 / JCM 9639 / NBRC 100938).